Consider the following 1246-residue polypeptide: DNA-directed RNA polymerase subunit beta (1246 aa).

Residues 1171 to 1246 (IDDDAGEMSL…EFDGYNDFKA (76 aa)) are disordered. Composition is skewed to acidic residues over residues 1202–1223 (DEEE…EDFE) and 1230–1240 (EYAEDDDEFDG).

It belongs to the RNA polymerase beta chain family. In terms of assembly, the RNAP catalytic core consists of 2 alpha, 1 beta, 1 beta' and 1 omega subunit. When a sigma factor is associated with the core the holoenzyme is formed, which can initiate transcription.

It carries out the reaction RNA(n) + a ribonucleoside 5'-triphosphate = RNA(n+1) + diphosphate. Its function is as follows. DNA-dependent RNA polymerase catalyzes the transcription of DNA into RNA using the four ribonucleoside triphosphates as substrates. In Alkaliphilus metalliredigens (strain QYMF), this protein is DNA-directed RNA polymerase subunit beta.